A 352-amino-acid polypeptide reads, in one-letter code: Phosphoribosylformylglycinamidine cyclo-ligase (352 aa).

This sequence belongs to the AIR synthase family.

Its subcellular location is the cytoplasm. It catalyses the reaction 2-formamido-N(1)-(5-O-phospho-beta-D-ribosyl)acetamidine + ATP = 5-amino-1-(5-phospho-beta-D-ribosyl)imidazole + ADP + phosphate + H(+). The protein operates within purine metabolism; IMP biosynthesis via de novo pathway; 5-amino-1-(5-phospho-D-ribosyl)imidazole from N(2)-formyl-N(1)-(5-phospho-D-ribosyl)glycinamide: step 2/2. In Azoarcus sp. (strain BH72), this protein is Phosphoribosylformylglycinamidine cyclo-ligase.